The following is a 181-amino-acid chain: UPF0228 protein MA_3117 (181 aa).

This sequence belongs to the UPF0228 family.

In Methanosarcina acetivorans (strain ATCC 35395 / DSM 2834 / JCM 12185 / C2A), this protein is UPF0228 protein MA_3117.